Consider the following 93-residue polypeptide: Small ribosomal subunit protein uS19 (93 aa).

2 disordered regions span residues 1–24 and 73–93; these read MPRSLKKGPFVDDHLQKKVDAQNE and EFAPTRTFKGHEKDDRKGRRR. 2 stretches are compositionally biased toward basic and acidic residues: residues 9–21 and 81–93; these read PFVDDHLQKKVDA and KGHEKDDRKGRRR.

This sequence belongs to the universal ribosomal protein uS19 family.

Protein S19 forms a complex with S13 that binds strongly to the 16S ribosomal RNA. The protein is Small ribosomal subunit protein uS19 of Kineococcus radiotolerans (strain ATCC BAA-149 / DSM 14245 / SRS30216).